Here is a 161-residue protein sequence, read N- to C-terminus: Large ribosomal subunit protein uL15 (161 aa).

A disordered region spans residues 1–50 (MKLSDIADNAGSRKKRMRIGRGIGSGKGKTGGRGGKGQTARSGVRINGFE). The span at 21-37 (RGIGSGKGKTGGRGGKG) shows a compositional bias: gly residues.

The protein belongs to the universal ribosomal protein uL15 family. Part of the 50S ribosomal subunit.

Binds to the 23S rRNA. The sequence is that of Large ribosomal subunit protein uL15 from Nitrobacter winogradskyi (strain ATCC 25391 / DSM 10237 / CIP 104748 / NCIMB 11846 / Nb-255).